Here is a 263-residue protein sequence, read N- to C-terminus: Small ribosomal subunit protein eS4, Y isoform 2 (263 aa).

In terms of domain architecture, S4 RNA-binding spans 42–104 (LPLIVFLRNR…TGEHFRLVYN (63 aa)).

This sequence belongs to the eukaryotic ribosomal protein eS4 family.

The chain is Small ribosomal subunit protein eS4, Y isoform 2 (RPS4Y2) from Homo sapiens (Human).